Consider the following 226-residue polypeptide: 2-C-methyl-D-erythritol 4-phosphate cytidylyltransferase (226 aa).

Belongs to the IspD/TarI cytidylyltransferase family. IspD subfamily.

It carries out the reaction 2-C-methyl-D-erythritol 4-phosphate + CTP + H(+) = 4-CDP-2-C-methyl-D-erythritol + diphosphate. Its pathway is isoprenoid biosynthesis; isopentenyl diphosphate biosynthesis via DXP pathway; isopentenyl diphosphate from 1-deoxy-D-xylulose 5-phosphate: step 2/6. In terms of biological role, catalyzes the formation of 4-diphosphocytidyl-2-C-methyl-D-erythritol from CTP and 2-C-methyl-D-erythritol 4-phosphate (MEP). The polypeptide is 2-C-methyl-D-erythritol 4-phosphate cytidylyltransferase (Bacillus cereus (strain ATCC 10987 / NRS 248)).